The sequence spans 63 residues: Large ribosomal subunit protein uL29 (63 aa).

The protein belongs to the universal ribosomal protein uL29 family.

The chain is Large ribosomal subunit protein uL29 from Edwardsiella ictaluri (strain 93-146).